Consider the following 483-residue polypeptide: Protein nucleotidyltransferase YdiU (483 aa).

The ATP site is built by G87, G89, R90, K110, D122, G123, R173, and R180. The active-site Proton acceptor is D249. Mg(2+)-binding residues include N250 and D259. Position 259 (D259) interacts with ATP.

Belongs to the SELO family. Requires Mg(2+) as cofactor. Mn(2+) is required as a cofactor.

The catalysed reaction is L-seryl-[protein] + ATP = 3-O-(5'-adenylyl)-L-seryl-[protein] + diphosphate. The enzyme catalyses L-threonyl-[protein] + ATP = 3-O-(5'-adenylyl)-L-threonyl-[protein] + diphosphate. It catalyses the reaction L-tyrosyl-[protein] + ATP = O-(5'-adenylyl)-L-tyrosyl-[protein] + diphosphate. It carries out the reaction L-histidyl-[protein] + UTP = N(tele)-(5'-uridylyl)-L-histidyl-[protein] + diphosphate. The catalysed reaction is L-seryl-[protein] + UTP = O-(5'-uridylyl)-L-seryl-[protein] + diphosphate. The enzyme catalyses L-tyrosyl-[protein] + UTP = O-(5'-uridylyl)-L-tyrosyl-[protein] + diphosphate. In terms of biological role, nucleotidyltransferase involved in the post-translational modification of proteins. It can catalyze the addition of adenosine monophosphate (AMP) or uridine monophosphate (UMP) to a protein, resulting in modifications known as AMPylation and UMPylation. In Yersinia pseudotuberculosis serotype O:1b (strain IP 31758), this protein is Protein nucleotidyltransferase YdiU.